A 185-amino-acid polypeptide reads, in one-letter code: Ribosome-recycling factor (185 aa).

The protein belongs to the RRF family.

It localises to the cytoplasm. In terms of biological role, responsible for the release of ribosomes from messenger RNA at the termination of protein biosynthesis. May increase the efficiency of translation by recycling ribosomes from one round of translation to another. The chain is Ribosome-recycling factor from Listeria welshimeri serovar 6b (strain ATCC 35897 / DSM 20650 / CCUG 15529 / CIP 8149 / NCTC 11857 / SLCC 5334 / V8).